Here is a 179-residue protein sequence, read N- to C-terminus: Caveolin-1 (179 aa).

Serine 2 carries the N-acetylserine modification. Serine 2 carries the post-translational modification Phosphoserine. The interval 2–95 (SGGKYVDSEG…WKASFTTFTV (94 aa)) is required for homooligomerization. The Cytoplasmic segment spans residues 2–105 (SGGKYVDSEG…TKYWFYRLLS (104 aa)). At lysine 5 the chain carries N6-acetyllysine; alternate. Lysine 5 participates in a covalent cross-link: Glycyl lysine isopeptide (Lys-Gly) (interchain with G-Cter in ubiquitin); alternate. At tyrosine 6 the chain carries Phosphotyrosine. At serine 9 the chain carries Phosphoserine. At tyrosine 14 the chain carries Phosphotyrosine; by ABL1. Phosphotyrosine is present on tyrosine 25. Glycyl lysine isopeptide (Lys-Gly) (interchain with G-Cter in ubiquitin) cross-links involve residues lysine 26 and lysine 30. Phosphoserine is present on serine 37. Glycyl lysine isopeptide (Lys-Gly) (interchain with G-Cter in ubiquitin) cross-links involve residues lysine 39, lysine 48, and lysine 58. An interaction with CAVIN3 region spans residues 83 to 95 (DGIWKASFTTFTV). The helical intramembrane region spans 106-126 (ALFGIPMALIWGIYFAILSFL). Residues 127–179 (HIWAVVPCIKSFLIEIQCISRVYSIYVHTFCDPLFEAIGKVFSNIRINMQKEI) lie on the Cytoplasmic side of the membrane. The interacts with SPRY1, SPRY2, SPRY3 and SPRY4 stretch occupies residues 132 to 143 (VPCIKSFLIEIQ). S-palmitoyl cysteine attachment occurs at residues cysteine 134, cysteine 144, and cysteine 157. Residues 150 to 161 (SIYVHTFCDPLF) form an interacts with SPRY1, SPRY2, and SPRY4 region. Residues 168–179 (FSNIRINMQKEI) form an interacts with SPRY1, SPRY2, SPRY3 and SPRY4 region.

It belongs to the caveolin family. In terms of assembly, homooligomer. Interacts with GLIPR2. Interacts with NOSTRIN. Interacts with SNAP25 and STX1A. Interacts (via the N-terminus) with DPP4; the interaction is direct. Interacts with CTNNB1, CDH1 and JUP. Interacts with PACSIN2; this interaction induces membrane tubulation. Interacts with SLC7A9. Interacts with BMX and BTK. Interacts with TGFBR1. Interacts with CAVIN3 (via leucine-zipper domain) in a cholesterol-sensitive manner. Interacts with CAVIN1. Interacts with EHD2 in a cholesterol-dependent manner. Forms a ternary complex with UBXN6 and VCP; mediates CAV1 targeting to lysosomes for degradation. Interacts with ABCG1; this interaction regulates ABCG1-mediated cholesterol efflux. Interacts with NEU3; this interaction enhances NEU3 sialidase activity within caveola. Interacts (via C-terminus) with SPRY1, SPRY2 (via C-terminus), SPRY3, and SPRY4. Interacts with IGFBP5; this interaction allows trafficking of IGFBP5 from the plasma membrane to the nucleus. Phosphorylated at Tyr-14 by ABL1 in response to oxidative stress. Post-translationally, ubiquitinated. Undergo monoubiquitination and multi- and/or polyubiquitination. Monoubiquitination of N-terminal lysines promotes integration in a ternary complex with UBXN6 and VCP which promotes oligomeric CAV1 targeting to lysosomes for degradation. Ubiquitinated by ZNRF1; leading to degradation and modulation of the TLR4-mediated immune response.

Its subcellular location is the golgi apparatus membrane. The protein resides in the cell membrane. It localises to the membrane. It is found in the caveola. The protein localises to the membrane raft. May act as a scaffolding protein within caveolar membranes. Forms a stable heterooligomeric complex with CAV2 that targets to lipid rafts and drives caveolae formation. Mediates the recruitment of CAVIN proteins (CAVIN1/2/3/4) to the caveolae. Interacts directly with G-protein alpha subunits and can functionally regulate their activity. Involved in the costimulatory signal essential for T-cell receptor (TCR)-mediated T-cell activation. Its binding to DPP4 induces T-cell proliferation and NF-kappa-B activation in a T-cell receptor/CD3-dependent manner. Recruits CTNNB1 to caveolar membranes and may regulate CTNNB1-mediated signaling through the Wnt pathway. Negatively regulates TGFB1-mediated activation of SMAD2/3 by mediating the internalization of TGFBR1 from membrane rafts leading to its subsequent degradation. Binds 20(S)-hydroxycholesterol (20(S)-OHC). The polypeptide is Caveolin-1 (CAV1) (Eulemur macaco macaco (Black lemur)).